Here is a 167-residue protein sequence, read N- to C-terminus: Sperm acrosome membrane-associated protein 3 (167 aa).

Over 1-63 the chain is Cytoplasmic; it reads MVSALREAPL…EARSRALRRR (63 aa). Residues 64–84 form a helical; Signal-anchor for type II membrane protein membrane-spanning segment; it reads WCPAGIILLALISLLSCLLPA. The Extracellular portion of the chain corresponds to 85–167; sequence SEAKVYGRCE…VPNVCQMYCS (83 aa). The region spanning 88–167 is the C-type lysozyme domain; the sequence is KVYGRCELAR…VPNVCQMYCS (80 aa). A disulfide bridge connects residues C151 and C166.

This sequence belongs to the glycosyl hydrolase 22 family. In terms of assembly, interacts with ASTL. In terms of processing, the processed form derives from the membrane form by proteolytic processing.

Its subcellular location is the cytoplasmic vesicle. It is found in the secretory vesicle. The protein localises to the acrosome membrane. Its function is as follows. Sperm surface membrane protein that may be involved in sperm-egg plasma membrane adhesion and fusion during fertilization. It could be a potential receptor for the egg oligosaccharide residue N-acetylglucosamine, which is present in the extracellular matrix over the egg plasma membrane. The processed form has no detectable bacteriolytic activity in vitro. The chain is Sperm acrosome membrane-associated protein 3 (SPACA3) from Pongo pygmaeus (Bornean orangutan).